A 149-amino-acid polypeptide reads, in one-letter code: SsrA-binding protein (149 aa).

This sequence belongs to the SmpB family.

The protein resides in the cytoplasm. Required for rescue of stalled ribosomes mediated by trans-translation. Binds to transfer-messenger RNA (tmRNA), required for stable association of tmRNA with ribosomes. tmRNA and SmpB together mimic tRNA shape, replacing the anticodon stem-loop with SmpB. tmRNA is encoded by the ssrA gene; the 2 termini fold to resemble tRNA(Ala) and it encodes a 'tag peptide', a short internal open reading frame. During trans-translation Ala-aminoacylated tmRNA acts like a tRNA, entering the A-site of stalled ribosomes, displacing the stalled mRNA. The ribosome then switches to translate the ORF on the tmRNA; the nascent peptide is terminated with the 'tag peptide' encoded by the tmRNA and targeted for degradation. The ribosome is freed to recommence translation, which seems to be the essential function of trans-translation. This is SsrA-binding protein from Carboxydothermus hydrogenoformans (strain ATCC BAA-161 / DSM 6008 / Z-2901).